The chain runs to 310 residues: Cytochrome f (310 aa).

An N-terminal signal peptide occupies residues 1 to 23 (MRRLIPILLGSLVLSLSILVAPA). Heme contacts are provided by Tyr-28, Cys-48, Cys-51, and His-52. Residues 277 to 297 (IYGLLAFFVAVSLAQILLVLK) traverse the membrane as a helical segment.

It belongs to the cytochrome f family. As to quaternary structure, the 4 large subunits of the cytochrome b6-f complex are cytochrome b6, subunit IV (17 kDa polypeptide, PetD), cytochrome f and the Rieske protein, while the 4 small subunits are PetG, PetL, PetM and PetN. The complex functions as a dimer. Heme serves as cofactor.

The protein localises to the cellular thylakoid membrane. Component of the cytochrome b6-f complex, which mediates electron transfer between photosystem II (PSII) and photosystem I (PSI), cyclic electron flow around PSI, and state transitions. This is Cytochrome f from Prochlorococcus marinus (strain MIT 9303).